A 129-amino-acid polypeptide reads, in one-letter code: Small ribosomal subunit protein uS9 (129 aa).

The protein belongs to the universal ribosomal protein uS9 family.

This is Small ribosomal subunit protein uS9 from Helicobacter pylori (strain P12).